A 618-amino-acid polypeptide reads, in one-letter code: Dihydroxy-acid dehydratase 1 (618 aa).

Aspartate 81 is a Mg(2+) binding site. Position 122 (cysteine 122) interacts with [2Fe-2S] cluster. 2 residues coordinate Mg(2+): aspartate 123 and lysine 124. Position 124 is an N6-carboxylysine (lysine 124). Cysteine 195 provides a ligand contact to [2Fe-2S] cluster. Glutamate 491 provides a ligand contact to Mg(2+). Residue serine 517 is the Proton acceptor of the active site.

This sequence belongs to the IlvD/Edd family. In terms of assembly, homodimer. [2Fe-2S] cluster is required as a cofactor. It depends on Mg(2+) as a cofactor.

The enzyme catalyses (2R)-2,3-dihydroxy-3-methylbutanoate = 3-methyl-2-oxobutanoate + H2O. It carries out the reaction (2R,3R)-2,3-dihydroxy-3-methylpentanoate = (S)-3-methyl-2-oxopentanoate + H2O. The protein operates within amino-acid biosynthesis; L-isoleucine biosynthesis; L-isoleucine from 2-oxobutanoate: step 3/4. It functions in the pathway amino-acid biosynthesis; L-valine biosynthesis; L-valine from pyruvate: step 3/4. Its function is as follows. Functions in the biosynthesis of branched-chain amino acids. Catalyzes the dehydration of (2R,3R)-2,3-dihydroxy-3-methylpentanoate (2,3-dihydroxy-3-methylvalerate) into 2-oxo-3-methylpentanoate (2-oxo-3-methylvalerate) and of (2R)-2,3-dihydroxy-3-methylbutanoate (2,3-dihydroxyisovalerate) into 2-oxo-3-methylbutanoate (2-oxoisovalerate), the penultimate precursor to L-isoleucine and L-valine, respectively. The polypeptide is Dihydroxy-acid dehydratase 1 (Pseudoalteromonas translucida (strain TAC 125)).